Consider the following 821-residue polypeptide: Leucine--tRNA ligase (821 aa).

The short motif at 44-54 (PYPSGRIHMGH) is the 'HIGH' region element. A 'KMSKS' region motif is present at residues 589-593 (KMSKS). Lysine 592 lines the ATP pocket.

The protein belongs to the class-I aminoacyl-tRNA synthetase family.

It localises to the cytoplasm. The catalysed reaction is tRNA(Leu) + L-leucine + ATP = L-leucyl-tRNA(Leu) + AMP + diphosphate. The sequence is that of Leucine--tRNA ligase from Campylobacter concisus (strain 13826).